A 937-amino-acid polypeptide reads, in one-letter code: Isoleucine--tRNA ligase (937 aa).

Residues 58 to 68 (PYANGSIHIGH) carry the 'HIGH' region motif. An L-isoleucyl-5'-AMP-binding site is contributed by glutamate 561. The short motif at 602 to 606 (KMSKS) is the 'KMSKS' region element. An ATP-binding site is contributed by lysine 605. The Zn(2+) site is built by cysteine 900, cysteine 903, cysteine 920, and cysteine 923.

This sequence belongs to the class-I aminoacyl-tRNA synthetase family. IleS type 1 subfamily. As to quaternary structure, monomer. The cofactor is Zn(2+).

The protein localises to the cytoplasm. The catalysed reaction is tRNA(Ile) + L-isoleucine + ATP = L-isoleucyl-tRNA(Ile) + AMP + diphosphate. Catalyzes the attachment of isoleucine to tRNA(Ile). As IleRS can inadvertently accommodate and process structurally similar amino acids such as valine, to avoid such errors it has two additional distinct tRNA(Ile)-dependent editing activities. One activity is designated as 'pretransfer' editing and involves the hydrolysis of activated Val-AMP. The other activity is designated 'posttransfer' editing and involves deacylation of mischarged Val-tRNA(Ile). This is Isoleucine--tRNA ligase from Pectobacterium carotovorum subsp. carotovorum (strain PC1).